The primary structure comprises 697 residues: Long-chain-fatty-acid--CoA ligase 6 (697 aa).

A helical; Signal-anchor for type III membrane protein transmembrane segment spans residues 25 to 45; the sequence is LSATTLVSMGALAAILAYWFT. The Cytoplasmic segment spans residues 46–697; sequence HRPKALQPPC…QIEELYSISM (652 aa).

Belongs to the ATP-dependent AMP-binding enzyme family. It depends on Mg(2+) as a cofactor. Expressed predominantly in erythrocyte precursors, in particular in reticulocytes, fetal blood cells derived from fetal liver, hemopoietic stem cells from cord blood, bone marrow and brain.

The protein localises to the mitochondrion outer membrane. It localises to the peroxisome membrane. The protein resides in the microsome membrane. It is found in the endoplasmic reticulum membrane. The enzyme catalyses a long-chain fatty acid + ATP + CoA = a long-chain fatty acyl-CoA + AMP + diphosphate. It catalyses the reaction (5Z,8Z,11Z,14Z)-eicosatetraenoate + ATP + CoA = (5Z,8Z,11Z,14Z)-eicosatetraenoyl-CoA + AMP + diphosphate. It carries out the reaction hexadecanoate + ATP + CoA = hexadecanoyl-CoA + AMP + diphosphate. The catalysed reaction is (E)-hexadec-2-enoate + ATP + CoA = (2E)-hexadecenoyl-CoA + AMP + diphosphate. The enzyme catalyses 15-hydroxy-(5Z,8Z,11Z,13E)-eicosatetraenoate + ATP + CoA = 15-hydroxy-(5Z,8Z,11Z,13E)-eicosatetraenoyl-CoA + AMP + diphosphate. It catalyses the reaction 12-hydroxy-(5Z,8Z,10E,14Z)-eicosatetraenoate + ATP + CoA = 12-hydroxy-(5Z,8Z,10E,14Z)-eicosatetraenoyl-CoA + AMP + diphosphate. It carries out the reaction 5-hydroxy-(6E,8Z,11Z,14Z)-eicosatetraenoate + ATP + CoA = 5-hydroxy-(6E,8Z,11Z,14Z)-eicosatetraenoyl-CoA + AMP + diphosphate. Functionally, catalyzes the conversion of long-chain fatty acids to their active form acyl-CoA for both synthesis of cellular lipids, and degradation via beta-oxidation. Plays an important role in fatty acid metabolism in brain and the acyl-CoAs produced may be utilized exclusively for the synthesis of the brain lipid. This chain is Long-chain-fatty-acid--CoA ligase 6, found in Homo sapiens (Human).